The sequence spans 381 residues: UDP-4-amino-4-deoxy-L-arabinose--oxoglutarate aminotransferase (381 aa).

Lys-182 is modified (N6-(pyridoxal phosphate)lysine).

It belongs to the DegT/DnrJ/EryC1 family. ArnB subfamily. Homodimer. It depends on pyridoxal 5'-phosphate as a cofactor.

It carries out the reaction UDP-4-amino-4-deoxy-beta-L-arabinose + 2-oxoglutarate = UDP-beta-L-threo-pentopyranos-4-ulose + L-glutamate. It functions in the pathway nucleotide-sugar biosynthesis; UDP-4-deoxy-4-formamido-beta-L-arabinose biosynthesis; UDP-4-deoxy-4-formamido-beta-L-arabinose from UDP-alpha-D-glucuronate: step 2/3. Its pathway is bacterial outer membrane biogenesis; lipopolysaccharide biosynthesis. Catalyzes the conversion of UDP-4-keto-arabinose (UDP-Ara4O) to UDP-4-amino-4-deoxy-L-arabinose (UDP-L-Ara4N). The modified arabinose is attached to lipid A and is required for resistance to polymyxin and cationic antimicrobial peptides. This is UDP-4-amino-4-deoxy-L-arabinose--oxoglutarate aminotransferase from Photorhabdus laumondii subsp. laumondii (strain DSM 15139 / CIP 105565 / TT01) (Photorhabdus luminescens subsp. laumondii).